Here is a 145-residue protein sequence, read N- to C-terminus: Cell division protein SepF (145 aa).

A disordered region spans residues 21–41; the sequence is DKPQESTKAKEENVKPKHETP. Positions 23-41 are enriched in basic and acidic residues; it reads PQESTKAKEENVKPKHETP.

It belongs to the SepF family. Homodimer. Interacts with FtsZ.

It localises to the cytoplasm. Cell division protein that is part of the divisome complex and is recruited early to the Z-ring. Probably stimulates Z-ring formation, perhaps through the cross-linking of FtsZ protofilaments. Its function overlaps with FtsA. The chain is Cell division protein SepF from Caldicellulosiruptor saccharolyticus (strain ATCC 43494 / DSM 8903 / Tp8T 6331).